The sequence spans 156 residues: Nucleoredoxin-like protein 2 (156 aa).

Residues 9–147 form the Thioredoxin domain; it reads HLVTCKGATV…LACFQDWVEA (139 aa).

It belongs to the nucleoredoxin family.

Functionally, may be involved in the maintenance of both the function and the viability of sensory neurons, including photoreceptors and olfactory neurons. The chain is Nucleoredoxin-like protein 2 (NXNL2) from Homo sapiens (Human).